Reading from the N-terminus, the 216-residue chain is Probable nicotinate-nucleotide adenylyltransferase (216 aa).

Belongs to the NadD family.

It carries out the reaction nicotinate beta-D-ribonucleotide + ATP + H(+) = deamido-NAD(+) + diphosphate. It functions in the pathway cofactor biosynthesis; NAD(+) biosynthesis; deamido-NAD(+) from nicotinate D-ribonucleotide: step 1/1. Its function is as follows. Catalyzes the reversible adenylation of nicotinate mononucleotide (NaMN) to nicotinic acid adenine dinucleotide (NaAD). The polypeptide is Probable nicotinate-nucleotide adenylyltransferase (Shewanella pealeana (strain ATCC 700345 / ANG-SQ1)).